We begin with the raw amino-acid sequence, 456 residues long: Bifunctional protein GlmU (456 aa).

Positions 1–229 (MLNNAMSVVI…LSEVEGVNNR (229 aa)) are pyrophosphorylase. UDP-N-acetyl-alpha-D-glucosamine-binding positions include 11–14 (LAAG), Lys-25, Gln-76, 81–82 (GT), 103–105 (YGD), Gly-140, Glu-154, Asn-169, and Asn-227. Residue Asp-105 coordinates Mg(2+). Asn-227 is a binding site for Mg(2+). Residues 230-250 (LQLSRLERVYQSEQAEKLLLA) are linker. Residues 251–456 (GVMLRDPARF…EGWRRPVKKK (206 aa)) form an N-acetyltransferase region. UDP-N-acetyl-alpha-D-glucosamine contacts are provided by Arg-333 and Lys-351. The active-site Proton acceptor is His-363. The UDP-N-acetyl-alpha-D-glucosamine site is built by Tyr-366 and Asn-377. Residues Ala-380, 386–387 (NY), Ser-405, Ala-423, and Arg-440 each bind acetyl-CoA.

It in the N-terminal section; belongs to the N-acetylglucosamine-1-phosphate uridyltransferase family. The protein in the C-terminal section; belongs to the transferase hexapeptide repeat family. Homotrimer. Mg(2+) is required as a cofactor.

It is found in the cytoplasm. The enzyme catalyses alpha-D-glucosamine 1-phosphate + acetyl-CoA = N-acetyl-alpha-D-glucosamine 1-phosphate + CoA + H(+). It catalyses the reaction N-acetyl-alpha-D-glucosamine 1-phosphate + UTP + H(+) = UDP-N-acetyl-alpha-D-glucosamine + diphosphate. The protein operates within nucleotide-sugar biosynthesis; UDP-N-acetyl-alpha-D-glucosamine biosynthesis; N-acetyl-alpha-D-glucosamine 1-phosphate from alpha-D-glucosamine 6-phosphate (route II): step 2/2. Its pathway is nucleotide-sugar biosynthesis; UDP-N-acetyl-alpha-D-glucosamine biosynthesis; UDP-N-acetyl-alpha-D-glucosamine from N-acetyl-alpha-D-glucosamine 1-phosphate: step 1/1. It functions in the pathway bacterial outer membrane biogenesis; LPS lipid A biosynthesis. Catalyzes the last two sequential reactions in the de novo biosynthetic pathway for UDP-N-acetylglucosamine (UDP-GlcNAc). The C-terminal domain catalyzes the transfer of acetyl group from acetyl coenzyme A to glucosamine-1-phosphate (GlcN-1-P) to produce N-acetylglucosamine-1-phosphate (GlcNAc-1-P), which is converted into UDP-GlcNAc by the transfer of uridine 5-monophosphate (from uridine 5-triphosphate), a reaction catalyzed by the N-terminal domain. This chain is Bifunctional protein GlmU, found in Escherichia coli O45:K1 (strain S88 / ExPEC).